Here is a 512-residue protein sequence, read N- to C-terminus: mRNA export factor (512 aa).

The interval 1-242 (MATDIDMLID…PVPERKAPSA (242 aa)) is disordered. Residues 5–17 (IDMLIDLGLDLSD) carry the Nuclear export signal motif. Ser-16 and Ser-18 each carry phosphoserine; by host. Acidic residues-rich tracts occupy residues 16–28 (SDSE…LERD) and 36–55 (PESD…EDPC). The tract at residues 104 to 112 (VWSRLGTRR) is interaction with host ALYREF. A Nuclear localization signal motif is present at residues 110–138 (TRRSASPREPHGGKVARIQPPSTKAPHPR). Ser-113 is modified (phosphoserine; by host). Basic residues predominate over residues 135–149 (PHPRGGRRGRRRGRG). The residue at position 138 (Arg-138) is a Dimethylated arginine; by host. The interval 138–152 (RGGRRGRRRGRGRYG) is RGG-box. Arg-148 is modified (omega-N-methylarginine; by host). Arg-150 carries the dimethylated arginine; by host modification. Residues 228 to 240 (ADGRAPVPERKAP) show a composition bias toward basic and acidic residues. Zn(2+)-binding residues include Cys-400, His-479, Cys-483, and Cys-488. The CHC2-type zinc-finger motif lies at 400-488 (CYLKARGLCG…HRQECSSRVC (89 aa)).

The protein belongs to the HHV-1 ICP27 protein family. In terms of assembly, interacts with host RBP1; this interaction facilitates the RNA polymerase recruitment to viral transcription sites. Interacts (via the RGG box) with host ALYREF/THOC4; this interaction recruits ALYREF to viral replication compartments and probably directs viral mRNA to the TAP/NFX1 pathway. Interacts (via the RGG box) with host SRPK1; this interaction relocalizes SRPK1 to the nucleus and seems to alter its activity. Interacts with ICP4; this interaction modulates ICP4 DNA-binding activity. Interacts with host NXF1; this interaction allows efficient export of HSV-1 early and late transcripts. Interacts with host IRF3; this interaction inhibits IRF3 phosphorylation and nuclear translocation. Post-translationally, methylated within the RGG box possibly by host PRMT1. When hypomethylated, ICP27 is exported to the cytoplasm earlier and more rapidly. Phosphorylated.

Its subcellular location is the host cytoplasm. The protein resides in the host nucleus. In terms of biological role, multifunctional regulator of the expression of viral genes that contributes to the shutoff of host protein synthesis and mediates nuclear export of viral intronless mRNAs. Also stimulates translation of viral transcripts. Independently, plays a role in the regulation of virion release. Also plays a role in the inhibition of host innate immune response by targeting host IRF3 and thereby preventing production of beta-interferon. Silences the 3' splice site of the host promyelocytic leukemia (PML) intron 7a, thereby switching PML isoforms from PML-II to PML-V. This could be linked to the accelerated mRNA export induced by ICP27 which might not provide sufficient time for PML pre-mRNA to be spliced in the nucleus. Also suppresses splicing of the viral ICP34.5 mRNA, allowing the virus to express a variant form of ICP34.5. The protein is mRNA export factor of Human herpesvirus 2 (strain HG52) (HHV-2).